A 503-amino-acid polypeptide reads, in one-letter code: Maturase K (503 aa).

The protein belongs to the intron maturase 2 family. MatK subfamily.

The protein resides in the plastid. Its subcellular location is the chloroplast. In terms of biological role, usually encoded in the trnK tRNA gene intron. Probably assists in splicing its own and other chloroplast group II introns. The protein is Maturase K of Vicia sativa (Spring vetch).